A 206-amino-acid chain; its full sequence is Uridine kinase (206 aa).

Residue 11 to 18 (GGTGSGKS) participates in ATP binding.

The protein belongs to the uridine kinase family.

It is found in the cytoplasm. The catalysed reaction is uridine + ATP = UMP + ADP + H(+). It catalyses the reaction cytidine + ATP = CMP + ADP + H(+). It participates in pyrimidine metabolism; CTP biosynthesis via salvage pathway; CTP from cytidine: step 1/3. The protein operates within pyrimidine metabolism; UMP biosynthesis via salvage pathway; UMP from uridine: step 1/1. This Clostridium botulinum (strain 657 / Type Ba4) protein is Uridine kinase.